The sequence spans 251 residues: Ribosomal RNA small subunit methyltransferase G (251 aa).

S-adenosyl-L-methionine-binding positions include G74, F79, 125–126, and R144; that span reads AE. The interval 224-251 is disordered; it reads RPAGLPTQHPLGAIEGAPRVESEEPEEP.

Belongs to the methyltransferase superfamily. RNA methyltransferase RsmG family.

It is found in the cytoplasm. Its function is as follows. Specifically methylates the N7 position of a guanine in 16S rRNA. The protein is Ribosomal RNA small subunit methyltransferase G of Gloeobacter violaceus (strain ATCC 29082 / PCC 7421).